Here is a 274-residue protein sequence, read N- to C-terminus: Momilactone A synthase (274 aa).

It belongs to the short-chain dehydrogenases/reductases (SDR) family.

It catalyses the reaction 3beta-hydroxy-9beta-pimara-7,15-dien-19,6beta-olide + NAD(+) = momilactone A + NADH + H(+). The catalysed reaction is 3beta-hydroxy-9beta-pimara-7,15-dien-19,6beta-olide + NADP(+) = momilactone A + NADPH + H(+). Functionally, involved in momilactone phytoalexins biosynthesis. Catalyzes the last step of momilactone A biosynthesis. The chain is Momilactone A synthase from Oryza sativa subsp. japonica (Rice).